Here is a 35-residue protein sequence, read N- to C-terminus: uncharacterized protein (35 aa).

Positions 1–18 are cleaved as a signal peptide; sequence MRSLVFVQLSLLSWEIFC.

This is an uncharacterized protein from Saccharomyces cerevisiae (strain ATCC 204508 / S288c) (Baker's yeast).